A 74-amino-acid chain; its full sequence is Conotoxin VxVIA (74 aa).

Residues 1-22 (MKLTCVLIIAVLFLTAYQLATA) form the signal peptide. Residues 23 to 47 (ASHAKGKQKHRALRPADKHFRFTKR) constitute a propeptide that is removed on maturation. Cystine bridges form between cysteine 48/cysteine 62, cysteine 55/cysteine 66, and cysteine 61/cysteine 73.

As to expression, expressed by the venom duct.

It is found in the secreted. In terms of biological role, when injected intracranially in mice, induces a series of symptoms such as quivering, climbing, scratching, barrel rolling and paralysis of limbs. Unexpectedly, no effect is observed on ionic currents when tested on locust DUM neuron. The sequence is that of Conotoxin VxVIA from Conus vexillum (Flag cone).